A 251-amino-acid chain; its full sequence is Pyrroline-5-carboxylate reductase (251 aa).

The protein belongs to the pyrroline-5-carboxylate reductase family.

The protein localises to the cytoplasm. It carries out the reaction L-proline + NADP(+) = (S)-1-pyrroline-5-carboxylate + NADPH + 2 H(+). It catalyses the reaction L-proline + NAD(+) = (S)-1-pyrroline-5-carboxylate + NADH + 2 H(+). The protein operates within amino-acid biosynthesis; L-proline biosynthesis; L-proline from L-glutamate 5-semialdehyde: step 1/1. Catalyzes the reduction of 1-pyrroline-5-carboxylate (PCA) to L-proline. This chain is Pyrroline-5-carboxylate reductase (proC), found in Methanobrevibacter smithii.